The sequence spans 499 residues: Maturase K (499 aa).

Belongs to the intron maturase 2 family. MatK subfamily.

Its subcellular location is the plastid. It localises to the chloroplast. Functionally, usually encoded in the trnK tRNA gene intron. Probably assists in splicing its own and other chloroplast group II introns. This chain is Maturase K, found in Camellia sasanqua (Christmas camellia).